Consider the following 126-residue polypeptide: Holo-[acyl-carrier-protein] synthase (126 aa).

Mg(2+)-binding residues include Asp-9 and Glu-58.

The protein belongs to the P-Pant transferase superfamily. AcpS family. The cofactor is Mg(2+).

It is found in the cytoplasm. The enzyme catalyses apo-[ACP] + CoA = holo-[ACP] + adenosine 3',5'-bisphosphate + H(+). Transfers the 4'-phosphopantetheine moiety from coenzyme A to a Ser of acyl-carrier-protein. The polypeptide is Holo-[acyl-carrier-protein] synthase (Erwinia tasmaniensis (strain DSM 17950 / CFBP 7177 / CIP 109463 / NCPPB 4357 / Et1/99)).